The sequence spans 436 residues: Protein disulfide-isomerase (436 aa).

The Thioredoxin domain maps to 216-365; the sequence is FLAGKIDPSI…VEDATESAKA (150 aa). Residues Cys266 and Cys269 each act as nucleophile in the active site. A disulfide bridge links Cys266 with Cys269. The tract at residues 328 to 436 is disordered; sequence TLVPHCRGSR…ASASSVKDEL (109 aa). A compositionally biased stretch (basic residues) spans 334–343; it reads RGSRPVHRRE. Low complexity-rich tracts occupy residues 362 to 377 and 385 to 436; these read SAKA…AASA and VKSG…KDEL. The short motif at 433–436 is the Prevents secretion from ER element; the sequence is KDEL.

This sequence belongs to the protein disulfide isomerase family.

Its subcellular location is the endoplasmic reticulum lumen. It carries out the reaction Catalyzes the rearrangement of -S-S- bonds in proteins.. Its function is as follows. Participates in the folding of proteins containing disulfide bonds, may be involved in glycosylation, prolyl hydroxylation and triglyceride transfer. In Alternaria alternata (Alternaria rot fungus), this protein is Protein disulfide-isomerase.